The sequence spans 51 residues: Cuticle protein CP575 (51 aa).

Positions 1-51 (GDIIDVDNDLFEHEQDGVAGTSVHGEYEAYDAYGNEYEVKYIADHLGFRVL) constitute a Chitin-binding type R&amp;R domain.

As to expression, calcified shell.

This is Cuticle protein CP575 from Cancer pagurus (Rock crab).